The sequence spans 1154 residues: Chromosome partition protein Smc (1154 aa).

32 to 39 (PNGCGKSN) contributes to the ATP binding site. Coiled-coil stretches lie at residues 170–215 (VAGL…ARQA), 282–505 (LREA…LNGE), and 627–993 (AARR…EARE).

It belongs to the SMC family. Homodimer.

The protein localises to the cytoplasm. Its function is as follows. Required for chromosome condensation and partitioning. This Rhodopseudomonas palustris (strain ATCC BAA-98 / CGA009) protein is Chromosome partition protein Smc.